A 962-amino-acid polypeptide reads, in one-letter code: Glycine dehydrogenase (decarboxylating) (962 aa).

Lysine 709 carries the post-translational modification N6-(pyridoxal phosphate)lysine.

The protein belongs to the GcvP family. In terms of assembly, the glycine cleavage system is composed of four proteins: P, T, L and H. Pyridoxal 5'-phosphate is required as a cofactor.

The catalysed reaction is N(6)-[(R)-lipoyl]-L-lysyl-[glycine-cleavage complex H protein] + glycine + H(+) = N(6)-[(R)-S(8)-aminomethyldihydrolipoyl]-L-lysyl-[glycine-cleavage complex H protein] + CO2. In terms of biological role, the glycine cleavage system catalyzes the degradation of glycine. The P protein binds the alpha-amino group of glycine through its pyridoxal phosphate cofactor; CO(2) is released and the remaining methylamine moiety is then transferred to the lipoamide cofactor of the H protein. The sequence is that of Glycine dehydrogenase (decarboxylating) from Shewanella sp. (strain MR-7).